Consider the following 579-residue polypeptide: Peptidyl-prolyl cis-trans isomerase-like 2 (579 aa).

A U-box domain is found at Arg-42 to Lys-115. Positions Ala-227–Ala-261 are disordered. Over residues Thr-250–His-259 the composition is skewed to polar residues. The PPIase cyclophilin-type domain maps to Gln-311–Ile-470. The tract at residues Glu-555–Asp-579 is disordered.

The protein belongs to the cyclophilin-type PPIase family. PPIL2 subfamily.

The protein resides in the nucleus. The catalysed reaction is [protein]-peptidylproline (omega=180) = [protein]-peptidylproline (omega=0). It catalyses the reaction S-ubiquitinyl-[E2 ubiquitin-conjugating enzyme]-L-cysteine + [acceptor protein]-L-lysine = [E2 ubiquitin-conjugating enzyme]-L-cysteine + N(6)-ubiquitinyl-[acceptor protein]-L-lysine.. The protein operates within protein modification; protein ubiquitination. Functionally, may catalyze the cis-trans isomerization of proline imidic peptide bonds in oligopeptides thereby assisting the folding of proteins. May also function as a chaperone, playing a role in intracellular transport of proteins. May also have a protein ubiquitin ligase activity acting as an E3 ubiquitin protein ligase or as a ubiquitin-ubiquitin ligase promoting elongation of ubiquitin chains on proteins. This is Peptidyl-prolyl cis-trans isomerase-like 2 (cyp8) from Aspergillus fumigatus (strain ATCC MYA-4609 / CBS 101355 / FGSC A1100 / Af293) (Neosartorya fumigata).